Reading from the N-terminus, the 224-residue chain is UPF0758 protein Csal_2972 (224 aa).

Residues 102–224 (ALTSPTLVRR…VVSFAERGWL (123 aa)) form the MPN domain. Zn(2+)-binding residues include histidine 173, histidine 175, and aspartate 186. Residues 173-186 (HNHPSGVAEPSDAD) carry the JAMM motif motif.

The protein belongs to the UPF0758 family.

The polypeptide is UPF0758 protein Csal_2972 (Chromohalobacter salexigens (strain ATCC BAA-138 / DSM 3043 / CIP 106854 / NCIMB 13768 / 1H11)).